The following is a 307-amino-acid chain: 2-methoxy-6-polyprenyl-1,4-benzoquinol methylase, mitochondrial (307 aa).

Residues M1–L19 constitute a mitochondrion transit peptide. S-adenosyl-L-methionine-binding positions include S122, D148, N179 to G180, and S197.

Belongs to the class I-like SAM-binding methyltransferase superfamily. MenG/UbiE family. As to quaternary structure, component of a multi-subunit COQ enzyme complex, composed of at least COQ3, COQ4, COQ5, COQ6, COQ7 and COQ9. Interacts with COQ3.

The protein localises to the mitochondrion inner membrane. It catalyses the reaction 2-methoxy-6-(all-trans-hexaprenyl)benzene-1,4-diol + S-adenosyl-L-methionine = 5-methoxy-2-methyl-3-(all-trans-hexaprenyl)benzene-1,4-diol + S-adenosyl-L-homocysteine + H(+). It participates in cofactor biosynthesis; ubiquinone biosynthesis. Its function is as follows. Methyltransferase required for the conversion of 2-hexaprenyl-6-methoxy-1,4-benzoquinol (DDMQH2) to 2-hexaprenyl-3-methyl-6-methoxy-1,4-benzoquinol (DMQH2). The polypeptide is 2-methoxy-6-polyprenyl-1,4-benzoquinol methylase, mitochondrial (Saccharomyces cerevisiae (strain ATCC 204508 / S288c) (Baker's yeast)).